The following is a 409-amino-acid chain: L-cysteine:1D-myo-inositol 2-amino-2-deoxy-alpha-D-glucopyranoside ligase (409 aa).

Position 25 (C25) interacts with Zn(2+). L-cysteinyl-5'-AMP contacts are provided by residues 25-28, T40, and 63-65; these read CGIT and NVT. The 'HIGH' region motif lies at 27–37; it reads ITPYDATHIGH. The 'ERGGDP' region signature appears at 179–184; it reads ERGGDP. Position 219 (W219) interacts with L-cysteinyl-5'-AMP. C223 is a Zn(2+) binding site. 241–243 contacts L-cysteinyl-5'-AMP; that stretch reads GSD. Residue H248 coordinates Zn(2+). V274 contacts L-cysteinyl-5'-AMP. The 'KMSKS' region signature appears at 280 to 284; that stretch reads KMSKS.

The protein belongs to the class-I aminoacyl-tRNA synthetase family. MshC subfamily. Monomer. Requires Zn(2+) as cofactor.

It carries out the reaction 1D-myo-inositol 2-amino-2-deoxy-alpha-D-glucopyranoside + L-cysteine + ATP = 1D-myo-inositol 2-(L-cysteinylamino)-2-deoxy-alpha-D-glucopyranoside + AMP + diphosphate + H(+). In terms of biological role, catalyzes the ATP-dependent condensation of GlcN-Ins and L-cysteine to form L-Cys-GlcN-Ins. The sequence is that of L-cysteine:1D-myo-inositol 2-amino-2-deoxy-alpha-D-glucopyranoside ligase from Clavibacter sepedonicus (Clavibacter michiganensis subsp. sepedonicus).